Here is a 401-residue protein sequence, read N- to C-terminus: Zinc finger CCHC domain-containing protein 12 (401 aa).

Disordered regions lie at residues 1–20 and 270–292; these read MASI…PLPP and DSDE…SAGP. Residues 270-282 are compositionally biased toward acidic residues; sequence DSDEDVILVEPDD. The CCHC-type zinc finger occupies 345 to 362; the sequence is VHCSHCGEEGHSKETCDN.

This sequence belongs to the ZCCHC12 family. As to quaternary structure, interacts with SMAD1 and CREB-binding protein (CBP). Forms a protein-DNA complex through its association with SMAD1.

Transcriptional coactivator in the bone morphogenetic protein (BMP)-signaling pathway. It positively modulates BMP signaling by interacting with SMAD1 and associating with CBP in the transcription complex. It contributes to the BMP-induced enhancement of cholinergic-neuron-specific gene expression. This is Zinc finger CCHC domain-containing protein 12 (Zcchc12) from Rattus norvegicus (Rat).